The sequence spans 247 residues: Probable transcriptional regulatory protein YPK_2146 (247 aa).

This sequence belongs to the TACO1 family.

Its subcellular location is the cytoplasm. The sequence is that of Probable transcriptional regulatory protein YPK_2146 from Yersinia pseudotuberculosis serotype O:3 (strain YPIII).